A 146-amino-acid polypeptide reads, in one-letter code: Hemoglobin subunit beta-1 (146 aa).

The Globin domain maps to 2-146 (HWTAEEKSAI…VAHALAHRYH (145 aa)). Heme b contacts are provided by His-63 and His-92.

The protein belongs to the globin family. As to quaternary structure, heterotetramer of two alpha chains and two beta chains. In terms of tissue distribution, red blood cells.

Its function is as follows. Involved in oxygen transport from the lung to the various peripheral tissues. In Drymarchon melanurus erebennus (Texas indigo snake), this protein is Hemoglobin subunit beta-1.